The primary structure comprises 247 residues: ATP synthase subunit a, chloroplastic (247 aa).

5 consecutive transmembrane segments (helical) span residues 38-58 (QVLI…IVTV), 95-115 (VPFI…GALL), 134-154 (INTT…AGLS), 199-219 (LVVV…VMFL), and 220-240 (GLFT…AYIG).

This sequence belongs to the ATPase A chain family. F-type ATPases have 2 components, CF(1) - the catalytic core - and CF(0) - the membrane proton channel. CF(1) has five subunits: alpha(3), beta(3), gamma(1), delta(1), epsilon(1). CF(0) has four main subunits: a, b, b' and c.

Its subcellular location is the plastid. The protein localises to the chloroplast thylakoid membrane. Its function is as follows. Key component of the proton channel; it plays a direct role in the translocation of protons across the membrane. The sequence is that of ATP synthase subunit a, chloroplastic from Populus alba (White poplar).